The chain runs to 262 residues: Protein CUSTOS (262 aa).

2 disordered regions span residues 1-79 and 126-262; these read MAAP…LQTT and FTSV…IPAN. Residues 9–18 show a composition bias toward low complexity; the sequence is SDSESSNSSS. A compositionally biased stretch (polar residues) spans 51–61; the sequence is ANSQLSTSQPS. Phosphoserine is present on Ser-61. Thr-79 is subject to Phosphothreonine. Ser-138 is modified (phosphoserine). Thr-182 bears the Phosphothreonine mark. Residues 188–199 show a composition bias toward basic residues; that stretch reads KKKRKLKKKAKK. Positions 200–209 are enriched in low complexity; that stretch reads VASVDSAVAA. Positions 210–221 are enriched in polar residues; it reads TTPTSMATVQKQ. Thr-211 carries the phosphothreonine modification. Residues 236 to 241 carry the Nucleolar localization signal (NLS) motif; the sequence is KKKKKA.

Belongs to the CUSTOS family.

It is found in the nucleus envelope. Plays a role in the regulation of Wnt signaling pathway during early development. This is Protein CUSTOS from Homo sapiens (Human).